The primary structure comprises 125 residues: NADPH-dependent 7-cyano-7-deazaguanine reductase (125 aa).

The Thioimide intermediate role is filled by Cys41. Asp48 (proton donor) is an active-site residue. Substrate is bound by residues 63–65 (VEL) and 82–83 (HE).

The protein belongs to the GTP cyclohydrolase I family. QueF type 1 subfamily.

The protein resides in the cytoplasm. The catalysed reaction is 7-aminomethyl-7-carbaguanine + 2 NADP(+) = 7-cyano-7-deazaguanine + 2 NADPH + 3 H(+). The protein operates within tRNA modification; tRNA-queuosine biosynthesis. Its function is as follows. Catalyzes the NADPH-dependent reduction of 7-cyano-7-deazaguanine (preQ0) to 7-aminomethyl-7-deazaguanine (preQ1). The polypeptide is NADPH-dependent 7-cyano-7-deazaguanine reductase (Sulfurimonas denitrificans (strain ATCC 33889 / DSM 1251) (Thiomicrospira denitrificans (strain ATCC 33889 / DSM 1251))).